The following is a 617-amino-acid chain: Dihydroxy-acid dehydratase (617 aa).

Aspartate 81 lines the Mg(2+) pocket. Residue cysteine 122 participates in [2Fe-2S] cluster binding. Aspartate 123 and lysine 124 together coordinate Mg(2+). Lysine 124 carries the N6-carboxylysine modification. Cysteine 195 provides a ligand contact to [2Fe-2S] cluster. Mg(2+) is bound at residue glutamate 491. The Proton acceptor role is filled by serine 517.

It belongs to the IlvD/Edd family. In terms of assembly, homodimer. Requires [2Fe-2S] cluster as cofactor. It depends on Mg(2+) as a cofactor.

The enzyme catalyses (2R)-2,3-dihydroxy-3-methylbutanoate = 3-methyl-2-oxobutanoate + H2O. It carries out the reaction (2R,3R)-2,3-dihydroxy-3-methylpentanoate = (S)-3-methyl-2-oxopentanoate + H2O. It functions in the pathway amino-acid biosynthesis; L-isoleucine biosynthesis; L-isoleucine from 2-oxobutanoate: step 3/4. Its pathway is amino-acid biosynthesis; L-valine biosynthesis; L-valine from pyruvate: step 3/4. Functions in the biosynthesis of branched-chain amino acids. Catalyzes the dehydration of (2R,3R)-2,3-dihydroxy-3-methylpentanoate (2,3-dihydroxy-3-methylvalerate) into 2-oxo-3-methylpentanoate (2-oxo-3-methylvalerate) and of (2R)-2,3-dihydroxy-3-methylbutanoate (2,3-dihydroxyisovalerate) into 2-oxo-3-methylbutanoate (2-oxoisovalerate), the penultimate precursor to L-isoleucine and L-valine, respectively. The protein is Dihydroxy-acid dehydratase of Caulobacter vibrioides (strain ATCC 19089 / CIP 103742 / CB 15) (Caulobacter crescentus).